Here is an 894-residue protein sequence, read N- to C-terminus: DNA mismatch repair protein MutS (894 aa).

An ATP-binding site is contributed by 632 to 639 (GPNMGGKS).

This sequence belongs to the DNA mismatch repair MutS family.

Its function is as follows. This protein is involved in the repair of mismatches in DNA. It is possible that it carries out the mismatch recognition step. This protein has a weak ATPase activity. This is DNA mismatch repair protein MutS from Paraburkholderia phytofirmans (strain DSM 17436 / LMG 22146 / PsJN) (Burkholderia phytofirmans).